A 243-amino-acid chain; its full sequence is Pyridoxine 5'-phosphate synthase (243 aa).

Residue Asn7 coordinates 3-amino-2-oxopropyl phosphate. 1-deoxy-D-xylulose 5-phosphate is bound at residue 9-10; the sequence is DH. Residue Arg18 coordinates 3-amino-2-oxopropyl phosphate. The active-site Proton acceptor is the His43. Positions 45 and 50 each coordinate 1-deoxy-D-xylulose 5-phosphate. Glu70 serves as the catalytic Proton acceptor. Residue Thr100 participates in 1-deoxy-D-xylulose 5-phosphate binding. Residue His190 is the Proton donor of the active site. 3-amino-2-oxopropyl phosphate contacts are provided by residues Gly191 and 212–213; that span reads GH.

It belongs to the PNP synthase family. As to quaternary structure, homooctamer; tetramer of dimers.

The protein resides in the cytoplasm. It carries out the reaction 3-amino-2-oxopropyl phosphate + 1-deoxy-D-xylulose 5-phosphate = pyridoxine 5'-phosphate + phosphate + 2 H2O + H(+). Its pathway is cofactor biosynthesis; pyridoxine 5'-phosphate biosynthesis; pyridoxine 5'-phosphate from D-erythrose 4-phosphate: step 5/5. Functionally, catalyzes the complicated ring closure reaction between the two acyclic compounds 1-deoxy-D-xylulose-5-phosphate (DXP) and 3-amino-2-oxopropyl phosphate (1-amino-acetone-3-phosphate or AAP) to form pyridoxine 5'-phosphate (PNP) and inorganic phosphate. The sequence is that of Pyridoxine 5'-phosphate synthase from Prochlorococcus marinus (strain MIT 9211).